A 155-amino-acid chain; its full sequence is Small ribosomal subunit protein uS7 (155 aa).

This sequence belongs to the universal ribosomal protein uS7 family. In terms of assembly, part of the 30S ribosomal subunit. Contacts proteins S9 and S11.

Its function is as follows. One of the primary rRNA binding proteins, it binds directly to 16S rRNA where it nucleates assembly of the head domain of the 30S subunit. Is located at the subunit interface close to the decoding center, probably blocks exit of the E-site tRNA. The protein is Small ribosomal subunit protein uS7 of Helicobacter acinonychis (strain Sheeba).